Consider the following 729-residue polypeptide: Serine/threonine-protein kinase TBK1 (729 aa).

Residues 9-310 (WLLSDILGQG…ETSDILHRMV (302 aa)) enclose the Protein kinase domain. 15–23 (LGQGATANV) lines the ATP pocket. Lys30 participates in a covalent cross-link: Glycyl lysine isopeptide (Lys-Gly) (interchain with G-Cter in ubiquitin). Lys38 contributes to the ATP binding site. The active-site Proton acceptor is the Asp135. Phosphoserine; by autocatalysis and IKKB is present on Ser172. The region spanning 309–385 (MVIHVFSLQQ…ENPIFVVSRE (77 aa)) is the Ubiquitin-like domain. A Glycyl lysine isopeptide (Lys-Gly) (interchain with G-Cter in ubiquitin) cross-link involves residue Lys401. Coiled-coil stretches lie at residues 407–657 (DLDG…LQET) and 658–713 (LPQK…ILER). Lys607 carries the post-translational modification N6-methyllysine; by SETD4. Positions 621–729 (RKMLHLRKQL…DGGLRNVDCL (109 aa)) are interaction with AZI2, TANK and TBKBP1. Residue Lys670 forms a Glycyl lysine isopeptide (Lys-Gly) (interchain with G-Cter in ubiquitin) linkage. Ser716 carries the phosphoserine modification.

The protein belongs to the protein kinase superfamily. Ser/Thr protein kinase family. I-kappa-B kinase subfamily. As to quaternary structure, homodimer. Interacts with DDX3X, TIRAP and TRAF2. Part of a ternary complex consisting of TANK, TRAF2 and TBK1. Interacts with AZI2, TANK and TBKBP1; these interactions are mutually exclusive and mediate TBK1 activation. Interacts with GSK3B; this interaction promotes TBK1 self-association and autophosphorylation. Interacts with SIKE1; SIKE1 is associated with TBK1 under physiological condition and dissociated from TBK1 upon viral infection or TLR3 stimulation. Interacts with IRF3, leading to IRF3 phosphorylation. Interacts with RIGI. Interacts with CYLD. Interacts with OPTN and TRAF3. Interacts with SRC. Interacts with the exocyst complex subunit SEC5/EXOC2; this interaction is sufficient to trigger TBK1 activity. Interacts with STING1, leading to STING1 phosphorylation. Interacts with IFIT3 (via N-terminus). Interacts with MAVS; interaction only takes place in the presence of IFIT3 and leads to MAVS phosphorylation. Interacts (via protein kinase domain) with TTLL12 (via TTL domain); the interaction prevents MAVS binding to TBK1. Interacts with TICAM1; this interaction is enhanced in the presence of WDFY1 and leads to TICAM1 phosphorylation. Interacts with TRIM26. Interacts with TRIM23. Interacts with TTC4 and IKBKE. Interacts with HNRNPA2B1. Interacts with DDX3X. Interacts with TRIM14. Interacts with CEP170; efficient complex formation may be dependent on the presence of CCDC61. Interacts with TRAF3IP3. Interacts with HSP90AA1; the interaction mediates TBK1 association with TOMM70. Interacts with TAX1BP1. Interacts with kinase IKBKB; the complex interacts with STAT1, leading to phosphorylation of STAT1 on 'Thr-749' by IKBKB. Interacts with ICOS; this interaction is critical for the maturation of T follicular regulatory cells. Interacts with RNF144B; this interaction prevents TBK1 phosphorylation and subsequent activation. Interacts with ASB8; this interaction promotes TBK1 proteasomal degradation. Forms a ternary complex with ZNF268 and SETD4; the interaction with SETD4 is ZNF268-dependent and leads to TBK1 monomethylation, which enhances its interaction with IRF3 and MAVS. In terms of assembly, (Microbial infection) Interacts with Borna disease virus (BDV) P protein leading to its phosphorylation. (Microbial infection) Interacts with Ebola virus protein VP35. As to quaternary structure, (Microbial infection) Interacts with HCV NS3; this interaction leads to inhibition of cellular antiviral response by blocking necessary interactions between the TBK1 and its substrates IRF3 and IRF7. In terms of assembly, (Microbial infection) Interacts with human herpesvirus 1 protein ICP34.5. (Microbial infection) Interacts with Zika virus non-structural protein 1/NS1 and non-structural protein 4B/NS4B. As to quaternary structure, (Microbial infection) Interacts with SARS-CoV-2 non-structural protein 6; this interaction decreases IRF3 phosphorylation by 57%, which leads to reduced IFN-beta (IFNB) production. Interacts with SARS-CoV-2 helicase; this interaction inhibits TBK1 phosphorylation and decreases IRF3 phosphorylation by 75%, which leads to reduced IFN-beta production. Interacts with SARS-CoV-2 M protein; the interaction promotes TBK1 degradation via 'Lys-48'-linked ubiquitination. In terms of assembly, (Microbial infection) Interacts with human cytomegalovirus protein UL35; this interaction inhibits type I interferon production. (Microbial infection) Interacts with heartland virus NSs; this interaction antagonizes TBK1 phosphorylation and inhibits TBK1-IRF3 interaction and thus the establishment of an antiviral state. As to quaternary structure, (Microbial infection) Interacts (via N-terminus) with Severe fever with thrombocytopenia virus (SFTSV) NSs; this interaction antagonizes TBK1 phosphorylation and sequesters TBK1 in NSs-induced cytoplasmic inclusion bodies thereby inhibiting the IFN responses. In terms of processing, autophosphorylation at Ser-172 activates the kinase, and is an essential step for virus-triggered signaling. Phosphorylated by IKBKB/IKKB at Ser-172. Phosphorylation requires homodimerization and ubiquitination at Lys-30 and Lys-401. Dephosphorylated at Ser-172 by PPM1B and this negatively regulates its role in mediating antiviral response. Post-translationally, 'Lys-63'-linked polyubiquitination by MIB1 after RNA virus infection, or by NRDP1 after LPS stimulation at Lys-30 and Lys-401, participates in kinase activation. 'Lys-48'-linked polyubiquitination at Lys-670 by DTX4 leads to proteasomal degradation. 'Lys-48'-linked polyubiquitination by TRAIP also leads to proteasomal degradation. 'Lys-48'-linked polyubiquitination by TRAF7; leading to proteasomal degradation. 'Lys-63'-linked polyubiquitination by RNF128 at Lys-30 and Lys-401 leads to the activation of antiviral responses. 'Lys-48'-linked polyubiquitination after 'lys-33'-linked deubiquitination by USP38 promotes TBK1 degradation. (Microbial infection) Interaction with SARS-CoV-2 M protein induces 'Lys-48'-linked ubiquitination which leads to proteasomal degradation. In terms of processing, (Microbial infection) Deubiquitinated by Epstein-Barr virus BPLF1 on both 'Lys-48' and 'Lys-63'-linked ubiquitin chains; leading to inhibition of type I interfewron production. Post-translationally, monomethylation at Lys-607 by SETD4 maximizes TBK1 activation and promotes efficient interferon signaling. Ubiquitous with higher expression in testis. Expressed in the ganglion cells, nerve fiber layer and microvasculature of the retina.

The protein localises to the cytoplasm. It catalyses the reaction L-seryl-[protein] + ATP = O-phospho-L-seryl-[protein] + ADP + H(+). The catalysed reaction is L-threonyl-[protein] + ATP = O-phospho-L-threonyl-[protein] + ADP + H(+). Functionally, serine/threonine kinase that plays an essential role in regulating inflammatory responses to foreign agents. Following activation of toll-like receptors by viral or bacterial components, associates with TRAF3 and TANK and phosphorylates interferon regulatory factors (IRFs) IRF3 and IRF7 as well as DDX3X. This activity allows subsequent homodimerization and nuclear translocation of the IRFs leading to transcriptional activation of pro-inflammatory and antiviral genes including IFNA and IFNB. In order to establish such an antiviral state, TBK1 form several different complexes whose composition depends on the type of cell and cellular stimuli. Plays a key role in IRF3 activation: acts by first phosphorylating innate adapter proteins MAVS, STING1 and TICAM1 on their pLxIS motif, leading to recruitment of IRF3, thereby licensing IRF3 for phosphorylation by TBK1. Phosphorylated IRF3 dissociates from the adapter proteins, dimerizes, and then enters the nucleus to induce expression of interferons. Thus, several scaffolding molecules including FADD, TRADD, MAVS, AZI2, TANK or TBKBP1/SINTBAD can be recruited to the TBK1-containing-complexes. Under particular conditions, functions as a NF-kappa-B effector by phosphorylating NF-kappa-B inhibitor alpha/NFKBIA, IKBKB or RELA to translocate NF-Kappa-B to the nucleus. Restricts bacterial proliferation by phosphorylating the autophagy receptor OPTN/Optineurin on 'Ser-177', thus enhancing LC3 binding affinity and antibacterial autophagy. Phosphorylates SMCR8 component of the C9orf72-SMCR8 complex, promoting autophagosome maturation. Phosphorylates ATG8 proteins MAP1LC3C and GABARAPL2, thereby preventing their delipidation and premature removal from nascent autophagosomes. Seems to play a role in energy balance regulation by sustaining a state of chronic, low-grade inflammation in obesity, which leads to a negative impact on insulin sensitivity. Attenuates retroviral budding by phosphorylating the endosomal sorting complex required for transport-I (ESCRT-I) subunit VPS37C. Phosphorylates Borna disease virus (BDV) P protein. Plays an essential role in the TLR3- and IFN-dependent control of herpes virus HSV-1 and HSV-2 infections in the central nervous system. Acts both as a positive and negative regulator of the mTORC1 complex, depending on the context: activates mTORC1 in response to growth factors by catalyzing phosphorylation of MTOR, while it limits the mTORC1 complex by promoting phosphorylation of RPTOR. Acts as a positive regulator of the mTORC2 complex by mediating phosphorylation of MTOR, leading to increased phosphorylation and activation of AKT1. Phosphorylates and activates AKT1. Involved in the regulation of TNF-induced RIPK1-mediated cell death, probably acting via CYLD phosphorylation that in turn controls RIPK1 ubiquitination status. Also participates in the differentiation of T follicular regulatory cells together with the receptor ICOS. This chain is Serine/threonine-protein kinase TBK1, found in Homo sapiens (Human).